We begin with the raw amino-acid sequence, 342 residues long: Ribosomal RNA small subunit methyltransferase C (342 aa).

Belongs to the methyltransferase superfamily. RsmC family. Monomer.

It localises to the cytoplasm. The catalysed reaction is guanosine(1207) in 16S rRNA + S-adenosyl-L-methionine = N(2)-methylguanosine(1207) in 16S rRNA + S-adenosyl-L-homocysteine + H(+). In terms of biological role, specifically methylates the guanine in position 1207 of 16S rRNA in the 30S particle. This is Ribosomal RNA small subunit methyltransferase C from Salmonella arizonae (strain ATCC BAA-731 / CDC346-86 / RSK2980).